A 175-amino-acid polypeptide reads, in one-letter code: ATP synthase subunit d, mitochondrial (175 aa).

S2 carries the post-translational modification N-acetylserine.

It belongs to the ATPase d subunit family.

Its subcellular location is the mitochondrion inner membrane. In terms of biological role, mitochondrial membrane ATP synthase (F(1)F(0) ATP synthase or Complex V) produces ATP from ADP in the presence of a proton gradient across the membrane which is generated by electron transport complexes of the respiratory chain. F-type ATPases consist of two structural domains, F(1) - containing the extramembraneous catalytic core, and F(0) - containing the membrane proton channel, linked together by a central stalk and a peripheral stalk. During catalysis, ATP synthesis in the catalytic domain of F(1) is coupled via a rotary mechanism of the central stalk subunits to proton translocation. Part of the complex F(0) domain and the peripheric stalk, which acts as a stator to hold the catalytic alpha(3)beta(3) subcomplex and subunit a/ATP6 static relative to the rotary elements. The sequence is that of ATP synthase subunit d, mitochondrial (atp7) from Schizosaccharomyces pombe (strain 972 / ATCC 24843) (Fission yeast).